The sequence spans 397 residues: Acetate kinase 1 (397 aa).

Asn8 lines the Mg(2+) pocket. ATP is bound at residue Lys15. Arg89 provides a ligand contact to substrate. Asp146 functions as the Proton donor/acceptor in the catalytic mechanism. Residues 206–210 (HLGNG), 281–283 (DLR), and 329–333 (GIGEN) each bind ATP. Glu382 contacts Mg(2+).

It belongs to the acetokinase family. Homodimer. It depends on Mg(2+) as a cofactor. Mn(2+) is required as a cofactor.

It is found in the cytoplasm. It carries out the reaction acetate + ATP = acetyl phosphate + ADP. It functions in the pathway metabolic intermediate biosynthesis; acetyl-CoA biosynthesis; acetyl-CoA from acetate: step 1/2. Its function is as follows. Catalyzes the formation of acetyl phosphate from acetate and ATP. Can also catalyze the reverse reaction. In Listeria monocytogenes serovar 1/2a (strain ATCC BAA-679 / EGD-e), this protein is Acetate kinase 1.